The following is a 474-amino-acid chain: Bifunctional protein HldE (474 aa).

Positions 1–318 (MKLSMPRFDQ…RAVQREQGSE (318 aa)) are ribokinase. 194 to 197 (NLSE) lines the ATP pocket. D263 is an active-site residue. The cytidylyltransferase stretch occupies residues 343–474 (FTNGCFDILH…AIVEKIRQKG (132 aa)).

In the N-terminal section; belongs to the carbohydrate kinase PfkB family. This sequence in the C-terminal section; belongs to the cytidylyltransferase family. As to quaternary structure, homodimer.

It catalyses the reaction D-glycero-beta-D-manno-heptose 7-phosphate + ATP = D-glycero-beta-D-manno-heptose 1,7-bisphosphate + ADP + H(+). The catalysed reaction is D-glycero-beta-D-manno-heptose 1-phosphate + ATP + H(+) = ADP-D-glycero-beta-D-manno-heptose + diphosphate. It functions in the pathway nucleotide-sugar biosynthesis; ADP-L-glycero-beta-D-manno-heptose biosynthesis; ADP-L-glycero-beta-D-manno-heptose from D-glycero-beta-D-manno-heptose 7-phosphate: step 1/4. The protein operates within nucleotide-sugar biosynthesis; ADP-L-glycero-beta-D-manno-heptose biosynthesis; ADP-L-glycero-beta-D-manno-heptose from D-glycero-beta-D-manno-heptose 7-phosphate: step 3/4. Its function is as follows. Catalyzes the phosphorylation of D-glycero-D-manno-heptose 7-phosphate at the C-1 position to selectively form D-glycero-beta-D-manno-heptose-1,7-bisphosphate. Catalyzes the ADP transfer from ATP to D-glycero-beta-D-manno-heptose 1-phosphate, yielding ADP-D-glycero-beta-D-manno-heptose. This chain is Bifunctional protein HldE, found in Pseudomonas paraeruginosa (strain DSM 24068 / PA7) (Pseudomonas aeruginosa (strain PA7)).